The following is a 333-amino-acid chain: Serine/threonine-protein phosphatase 4 catalytic subunit 1 (333 aa).

The segment at 1-28 is disordered; that stretch reads MALACTDSANSTFSRVDSPTSGPSDQLT. The segment covering 7 to 27 has biased composition (polar residues); the sequence is DSANSTFSRVDSPTSGPSDQL. Mn(2+) contacts are provided by D79, H81, D107, and N139. The active-site Proton donor is H140. Positions 189 and 264 each coordinate Mn(2+). L333 is modified (leucine methyl ester).

This sequence belongs to the PPP phosphatase family. PP-4 (PP-X) subfamily. Serine/threonine-protein phosphatase 4 (PP4) occurs in different assemblies of the catalytic and one or more regulatory subunits. The regulatory subunits are likely to be ppfr-1, ppfr-2, ppfr-4 and smk-1. Interacts with mei-1. The cofactor is Mn(2+). In terms of processing, methylation at the C-terminal Leu-333 is critical for interactions with regulatory subunits.

The protein localises to the cytoplasm. It is found in the cytoskeleton. It localises to the microtubule organizing center. The protein resides in the centrosome. The catalysed reaction is O-phospho-L-seryl-[protein] + H2O = L-seryl-[protein] + phosphate. It catalyses the reaction O-phospho-L-threonyl-[protein] + H2O = L-threonyl-[protein] + phosphate. Functionally, protein phosphatase which plays an essential role in meiosis and in early embryonic mitosis. During spermatocyte meiosis and the first embryonic mitosis, regulates centrosome maturation, and thus spindle formation, by recruiting some of the components of the pericentriolar material (PCM). During oocyte meiosis I, regulates meiotic chromosome dynamics including synapsis-independent chromosome pairing, restriction of synapsis to homologous chromosomes, programmed DNA double-strand break initiation and crossover formation resulting in chiasma formation. During oocyte meiosis II and probably together with regulatory subunit ppfr-1, may regulate microtubule severing by dephosphorylating and activating mei-1, a component of the katanin microtubule severing complex. The chain is Serine/threonine-protein phosphatase 4 catalytic subunit 1 from Caenorhabditis elegans.